Reading from the N-terminus, the 606-residue chain is (R)-limonene synthase 1, chloroplastic (606 aa).

The transit peptide at methionine 1 to methionine 32 directs the protein to the chloroplast. Residues aspartate 342 and aspartate 346 each coordinate Mn(2+). Positions 342, 346, 484, 487, and 503 each coordinate substrate. The DDXXD motif motif lies at aspartate 342 to aspartate 346. Residue aspartate 487 coordinates Mn(2+).

This sequence belongs to the terpene synthase family. Mg(2+) is required as a cofactor. The cofactor is Mn(2+).

It is found in the plastid. It localises to the chloroplast. It carries out the reaction (2E)-geranyl diphosphate = (4R)-limonene + diphosphate. The sequence is that of (R)-limonene synthase 1, chloroplastic from Citrus limon (Lemon).